Consider the following 439-residue polypeptide: Proline--tRNA ligase (439 aa).

It belongs to the class-II aminoacyl-tRNA synthetase family. ProS type 2 subfamily. Homodimer.

It is found in the cytoplasm. It catalyses the reaction tRNA(Pro) + L-proline + ATP = L-prolyl-tRNA(Pro) + AMP + diphosphate. Functionally, catalyzes the attachment of proline to tRNA(Pro) in a two-step reaction: proline is first activated by ATP to form Pro-AMP and then transferred to the acceptor end of tRNA(Pro). The chain is Proline--tRNA ligase from Beijerinckia indica subsp. indica (strain ATCC 9039 / DSM 1715 / NCIMB 8712).